The sequence spans 131 residues: Large ribosomal subunit protein bL17 (131 aa).

It belongs to the bacterial ribosomal protein bL17 family. As to quaternary structure, part of the 50S ribosomal subunit. Contacts protein L32.

The sequence is that of Large ribosomal subunit protein bL17 from Burkholderia ambifaria (strain MC40-6).